Reading from the N-terminus, the 338-residue chain is Malate dehydrogenase, mitochondrial (338 aa).

The transit peptide at 1-24 (MLSALARPAGAALRRSFSTSAQNN) directs the protein to the mitochondrion. NAD(+)-binding positions include 31–37 (GASGGIG) and Asp57. Ser33 carries O-linked (GlcNAc) serine glycosylation. An N6-acetyllysine; alternate mark is found at Lys78 and Lys91. N6-succinyllysine; alternate is present on residues Lys78 and Lys91. Substrate-binding residues include Arg104 and Arg110. NAD(+)-binding positions include Asn117 and 140 to 142 (ISN). A substrate-binding site is contributed by Asn142. Lys165 is modified (N6-acetyllysine). Arg176 provides a ligand contact to substrate. Lys185 is subject to N6-acetyllysine; alternate. N6-succinyllysine; alternate is present on Lys185. His200 (proton acceptor) is an active-site residue. Position 203 is an N6-succinyllysine (Lys203). N6-acetyllysine; alternate occurs at positions 215 and 239. N6-succinyllysine; alternate is present on residues Lys215 and Lys239. At Lys239 the chain carries N6-malonyllysine; alternate. Residue Ser246 is modified to Phosphoserine. Met251 contacts NAD(+). Position 269 is an N6-succinyllysine (Lys269). N6-acetyllysine; alternate occurs at positions 296, 301, 307, 314, and 324. Lys296, Lys301, Lys307, Lys314, and Lys324 each carry N6-succinyllysine; alternate. Lys307 bears the N6-malonyllysine; alternate mark. Ser326 is modified (phosphoserine). Residues Lys328, Lys329, and Lys335 each carry the N6-acetyllysine; alternate modification. Lys328 bears the N6-succinyllysine; alternate mark. At Lys329 the chain carries N6-malonyllysine; alternate. The residue at position 335 (Lys335) is an N6-succinyllysine; alternate.

Belongs to the LDH/MDH superfamily. MDH type 1 family. As to quaternary structure, homodimer. Acetylation is enhanced after treatment either with trichostin A (TCA) or with nicotinamide (NAM) with the appearance of tri- and tetraacetylations. Glucose also increases acetylation.

The protein resides in the mitochondrion matrix. It catalyses the reaction (S)-malate + NAD(+) = oxaloacetate + NADH + H(+). Its activity is regulated as follows. Enzyme activity is enhanced by acetylation. This Bos taurus (Bovine) protein is Malate dehydrogenase, mitochondrial (MDH2).